The chain runs to 127 residues: Holo-[acyl-carrier-protein] synthase (127 aa).

Residues aspartate 9 and glutamate 58 each contribute to the Mg(2+) site.

Belongs to the P-Pant transferase superfamily. AcpS family. Requires Mg(2+) as cofactor.

Its subcellular location is the cytoplasm. It carries out the reaction apo-[ACP] + CoA = holo-[ACP] + adenosine 3',5'-bisphosphate + H(+). In terms of biological role, transfers the 4'-phosphopantetheine moiety from coenzyme A to a Ser of acyl-carrier-protein. The polypeptide is Holo-[acyl-carrier-protein] synthase (Shewanella baltica (strain OS223)).